Here is a 665-residue protein sequence, read N- to C-terminus: DNA ligase (665 aa).

NAD(+) contacts are provided by residues 31-35, 80-81, and Glu110; these read DKEFD and SL. Lys112 functions as the N6-AMP-lysine intermediate in the catalytic mechanism. Residues Arg133, Glu170, Lys285, and Lys309 each coordinate NAD(+). Cys403, Cys406, Cys421, and Cys427 together coordinate Zn(2+). The 79-residue stretch at 587 to 665 folds into the BRCT domain; sequence GHTDKLAGQS…NEEEFLKLIS (79 aa).

It belongs to the NAD-dependent DNA ligase family. LigA subfamily. Mg(2+) serves as cofactor. It depends on Mn(2+) as a cofactor.

It carries out the reaction NAD(+) + (deoxyribonucleotide)n-3'-hydroxyl + 5'-phospho-(deoxyribonucleotide)m = (deoxyribonucleotide)n+m + AMP + beta-nicotinamide D-nucleotide.. Functionally, DNA ligase that catalyzes the formation of phosphodiester linkages between 5'-phosphoryl and 3'-hydroxyl groups in double-stranded DNA using NAD as a coenzyme and as the energy source for the reaction. It is essential for DNA replication and repair of damaged DNA. This is DNA ligase from Bacteroides fragilis (strain ATCC 25285 / DSM 2151 / CCUG 4856 / JCM 11019 / LMG 10263 / NCTC 9343 / Onslow / VPI 2553 / EN-2).